Here is a 202-residue protein sequence, read N- to C-terminus: Arenicin-1 (202 aa).

The signal sequence occupies residues 1–25; the sequence is MTSTQSVAVCATLILAIFCVNDIHC. Residues 26–181 constitute a propeptide that is removed on maturation; that stretch reads DPIAEARAAA…SGDNNEPEKR (156 aa). The 96-residue stretch at 73-168 folds into the BRICHOS domain; it reads GDGVEGSVMV…ACQGKSVYWL (96 aa). Disulfide bonds link C100/C160 and C184/C201.

Has antimicrobial activity against the Gram-negative bacteria E.coli and P.mirabilis, the Gram-positive bacterium L.monocytogenes and the yeast C.albicans. The chain is Arenicin-1 from Arenicola marina (Lugworm).